The following is a 467-amino-acid chain: Immunoglobulin superfamily member 21 (467 aa).

An N-terminal signal peptide occupies residues 1-24 (MRTAPSLRRCVCLLLAAILDLARG). Residues 25–132 (YLTVNIEPLP…RATREKVVLA (108 aa)) enclose the Ig-like 1 domain. A disulfide bridge links cysteine 46 with cysteine 116. N-linked (GlcNAc...) asparagine glycans are attached at residues asparagine 82 and asparagine 165. The segment at 229–259 (LSLLDAENRGGRPYTERPSRGLTPDPNILLQ) is disordered. Positions 234–247 (AENRGGRPYTERPS) are enriched in basic and acidic residues. The 86-residue stretch at 344 to 429 (PKIVMTPSRA…GSTDTHTRLI (86 aa)) folds into the Ig-like 2 domain. Residues asparagine 407 and asparagine 444 are each glycosylated (N-linked (GlcNAc...) asparagine).

In terms of assembly, interacts (Ig-like 1 domain) with NRXN2 (via Laminin G-like 1 domain) in a trans-interaction manner.

The protein localises to the postsynaptic cell membrane. Its function is as follows. Involved in synaptic inhibition in the brain. Selectively regulates inhibitory presynaptic differentiation through interacting with presynaptic NRXN2. This is Immunoglobulin superfamily member 21 from Homo sapiens (Human).